A 217-amino-acid polypeptide reads, in one-letter code: ATP synthase F(0) complex subunit a (217 aa).

6 helical membrane-spanning segments follow: residues 20–40, 70–90, 100–120, 126–146, 166–188, and 193–215; these read MNWISTLLIILFMPNFLWILP, PAFLFISLFMFILLNNFFSLF, MVFSVTLAIPFWMFFIILSTC, MIAHLIPLNTPIYLAPLMTII, LIAGHLLMTLLNFNSLMIIIIFI, and MIFELCVALIQSYVFSILSSLYS.

Belongs to the ATPase A chain family. Component of the ATP synthase complex composed at least of ATP5F1A/subunit alpha, ATP5F1B/subunit beta, ATP5MC1/subunit c (homooctomer), MT-ATP6/subunit a, MT-ATP8/subunit 8, ATP5ME/subunit e, ATP5MF/subunit f, ATP5MG/subunit g, ATP5MK/subunit k, ATP5MJ/subunit j, ATP5F1C/subunit gamma, ATP5F1D/subunit delta, ATP5F1E/subunit epsilon, ATP5PF/subunit F6, ATP5PB/subunit b, ATP5PD/subunit d, ATP5PO/subunit OSCP. ATP synthase complex consists of a soluble F(1) head domain (subunits alpha(3) and beta(3)) - the catalytic core - and a membrane F(0) domain - the membrane proton channel (subunits c, a, 8, e, f, g, k and j). These two domains are linked by a central stalk (subunits gamma, delta, and epsilon) rotating inside the F1 region and a stationary peripheral stalk (subunits F6, b, d, and OSCP). Interacts with DNAJC30; interaction is direct.

Its subcellular location is the mitochondrion inner membrane. The catalysed reaction is H(+)(in) = H(+)(out). Its function is as follows. Subunit a, of the mitochondrial membrane ATP synthase complex (F(1)F(0) ATP synthase or Complex V) that produces ATP from ADP in the presence of a proton gradient across the membrane which is generated by electron transport complexes of the respiratory chain. ATP synthase complex consist of a soluble F(1) head domain - the catalytic core - and a membrane F(1) domain - the membrane proton channel. These two domains are linked by a central stalk rotating inside the F(1) region and a stationary peripheral stalk. During catalysis, ATP synthesis in the catalytic domain of F(1) is coupled via a rotary mechanism of the central stalk subunits to proton translocation. With the subunit c (ATP5MC1), forms the proton-conducting channel in the F(0) domain, that contains two crucial half-channels (inlet and outlet) that facilitate proton movement from the mitochondrial intermembrane space (IMS) into the matrix. Protons are taken up via the inlet half-channel and released through the outlet half-channel, following a Grotthuss mechanism. This is ATP synthase F(0) complex subunit a from Rhopalosiphum padi (Bird cherry-oat aphid).